The sequence spans 267 residues: Extensin (267 aa).

The disordered stretch occupies residues 1 to 267; it reads MCPAFSIFFN…HTPSPPPPYY (267 aa). 13 consecutive repeats follow at residues 18–33, 34–54, 55–70, 71–91, 92–107, 108–128, 129–144, 145–160, 161–179, 180–195, 196–211, 212–232, and 233–253; these read PPTYTPSPKPPTPKPT, PPTYTPSPKPPASKPPTPKPT, PPTYTPSPKPPATKPPTPKPT, PPTYTPSPKPPTHPTPKPT, and PPTYTPTPKPPATKPPTYTPT. The segment at 18-253 is highly repetitive; that stretch reads PPTYTPSPKP…ATKPPTYTPT (236 aa). Residues 20 to 267 are compositionally biased toward pro residues; the sequence is TYTPSPKPPT…HTPSPPPPYY (248 aa). The interval 261–265 is extensin repetitive element; it reads SPPPP.

Hydroxylated on proline residues in the S-P-P-P-P repeat. In terms of processing, O-glycosylated on hydroxyprolines. Mainly in the coleoptile node and root tip.

The protein resides in the secreted. Its subcellular location is the primary cell wall. Structural component in primary cell wall. The sequence is that of Extensin (HRGP) from Zea mays (Maize).